Consider the following 518-residue polypeptide: Phenylacetate 2-hydroxylase (518 aa).

Position 437 (C437) interacts with heme.

This sequence belongs to the cytochrome P450 family.

It catalyses the reaction 2-phenylacetate + reduced [NADPH--hemoprotein reductase] + O2 = (2-hydroxyphenyl)acetate + oxidized [NADPH--hemoprotein reductase] + H2O + H(+). The protein operates within aromatic compound metabolism; phenylacetate degradation. In terms of biological role, catalyzes the hydroxylation of phenylacetate to 2-hydroxyphenylacetate in the homogentisate pathway. The homogentisate pathway is used to catabolize phenylacetate and use it as a carbon source. Can also catalyze the hydroxylation of 3-hydroxyphenylacetate to 2,5-dihydroxyphenylacetate (homogentisate) at low efficiency. In Emericella nidulans (Aspergillus nidulans), this protein is Phenylacetate 2-hydroxylase (phacA).